Consider the following 499-residue polypeptide: MRLPYRNKKVTLWVLFGIIVITMFLFKFTELRPTCLFKVDAANELSSQMVRVEKYLTDDNQRVYSYNREMPLIFIGGVPRSGTTLMRAMLDAHPDVRCGQETRVIPRILQLRSHWLKSEKESLRLQEAGITKEVMNSAIAQFCLEIIAKHGEPAPRLCNKDPLTLKMGSYVIELFPNAKFLFMVRDGRATVHSIISRKVTITGFDLSSYRQCMQKWNHAIEVMHEQCRDIGKDRCMMVYYEQLVLHPEEWMRKILKFLDVPWNDAVLHHEEFINKPNGVPLSKVERSSDQVIKPVNLEAMSKWVGQIPGDVVRDMADIAPMLSVLGYDPYANPPDYGKPDAWVQDNTSKLKANRMLWESKAKQVLQMSSSEDDNTNTIINNSNNKDNNNNQYTINKIIPEQHSRQRQHVQQQHLQQQQQQHLQQQQHQRQQQQQQREEESESEREAEPDREQQLLHQKPKDVITIKQLPLAGSNNNNINNNINNNNNNNNIMEDPMADT.

The Cytoplasmic segment spans residues 1–9 (MRLPYRNKK). Residues 10–30 (VTLWVLFGIIVITMFLFKFTE) form a helical; Signal-anchor for type II membrane protein membrane-spanning segment. The Lumenal portion of the chain corresponds to 31–499 (LRPTCLFKVD…NIMEDPMADT (469 aa)). 80-84 (RSGTT) contacts 3'-phosphoadenylyl sulfate. A disulfide bridge connects residues C98 and C158. E101 acts as the Proton donor/acceptor in catalysis. The tract at residues 103–107 (RVIPR) is interaction with peptide substrate. 3'-phosphoadenylyl sulfate contacts are provided by R185, S193, and R197. A disulfide bond links C227 and C235. Residues Y240, 287 to 296 (SSDQVIKPVN), and K302 contribute to the 3'-phosphoadenylyl sulfate site. Residues N346 and N380 are each glycosylated (N-linked (GlcNAc...) asparagine). Disordered stretches follow at residues 362–460 (KQVL…QKPK) and 476–499 (NNIN…MADT). 2 stretches are compositionally biased toward low complexity: residues 375–400 (TNTI…IIPE) and 408–434 (HVQQ…QQQQ). Positions 443-460 (EREAEPDREQQLLHQKPK) are enriched in basic and acidic residues. Residues 476–491 (NNINNNINNNNNNNNI) show a composition bias toward low complexity.

This sequence belongs to the protein sulfotransferase family.

It is found in the golgi apparatus membrane. The catalysed reaction is L-tyrosyl-[protein] + 3'-phosphoadenylyl sulfate = O-sulfo-L-tyrosine-[protein] + adenosine 3',5'-bisphosphate + H(+). Functionally, catalyzes the O-sulfation of tyrosine residues within acidic motifs of polypeptides. Has a role in protein secretion. The polypeptide is Protein-tyrosine sulfotransferase (Drosophila melanogaster (Fruit fly)).